The primary structure comprises 1230 residues: ABC transporter B family member 5 (1230 aa).

6 helical membrane passes run 27-47, 78-98, 154-174, 177-197, 253-273, and 286-306; these read VLLMIVGSIGAIANGVCSPLM, LVYLGLGALGAAFLQVACWMI, FIQLISTFVGGFVIAFLRGWL, LVMLTSIPLLAMSGAAIAIIV, GFVTGLGLGVMFLVFFSTYAL, and GYTGGAVINVMVTVVSSSIAL. The ABC transmembrane type-1 1 domain maps to 30–318; sequence MIVGSIGAIA…ASPCLTAFTA (289 aa). The region spanning 353–589 is the ABC transporter 1 domain; it reads IELRDVCFSY…HEGAYSQLLR (237 aa). 388–395 serves as a coordination point for ATP; sequence GESGSGKS. N-linked (GlcNAc...) asparagine glycans are attached at residues Asn-540, Asn-615, and Asn-616. Positions 602 to 621 are disordered; the sequence is ISDGSISSGSSRGNNSTRQD. The segment covering 603-617 has biased composition (low complexity); sequence SDGSISSGSSRGNNS. Transmembrane regions (helical) follow at residues 662 to 682 and 707 to 727; these read ILILGTLVGAVNGTIFPIFGI and MIFVLLGVAAVIVYPTTNYLF. Residues 663 to 950 form the ABC transmembrane type-1 2 domain; the sequence is LILGTLVGAV…ASSFAPDSSK (288 aa). An N-linked (GlcNAc...) asparagine glycan is attached at Asn-759. 3 helical membrane passes run 798-818, 889-909, and 924-944; these read IIAFTASWEVAIIILVIIPFI, GVGFGISFFVLYSVYASCFYV, and VFQVFLALTLTAVGISQASSF. The ABC transporter 2 domain maps to 985 to 1223; it reads IELCHISFTY…EGGVYASLVQ (239 aa). Residue 1020-1027 participates in ATP binding; that stretch reads GESGSGKS. N-linked (GlcNAc...) asparagine glycans are attached at residues Asn-1074, Asn-1174, and Asn-1227.

It belongs to the ABC transporter superfamily. ABCB family. Multidrug resistance exporter (TC 3.A.1.201) subfamily.

The protein resides in the membrane. In Arabidopsis thaliana (Mouse-ear cress), this protein is ABC transporter B family member 5 (ABCB5).